The chain runs to 364 residues: Fructose-1,6-bisphosphatase class 1 1 (364 aa).

Mg(2+) contacts are provided by glutamate 99, aspartate 121, leucine 123, and aspartate 124. Substrate is bound by residues 124-127 (DGSS) and asparagine 220. Glutamate 292 provides a ligand contact to Mg(2+).

Belongs to the FBPase class 1 family. Homotetramer. Requires Mg(2+) as cofactor.

Its subcellular location is the cytoplasm. It carries out the reaction beta-D-fructose 1,6-bisphosphate + H2O = beta-D-fructose 6-phosphate + phosphate. The protein operates within carbohydrate biosynthesis; gluconeogenesis. In Albidiferax ferrireducens (strain ATCC BAA-621 / DSM 15236 / T118) (Rhodoferax ferrireducens), this protein is Fructose-1,6-bisphosphatase class 1 1.